We begin with the raw amino-acid sequence, 444 residues long: Cytokine receptor-like factor 3 (444 aa).

Residues 1-65 adopt a coiled-coil conformation; that stretch reads MSIEAEALLQ…QELQTAVSRL (65 aa). The region spanning 177–270 is the Fibronectin type-III domain; that stretch reads PPVQIEELVE…PQTGYTTLAP (94 aa).

The protein belongs to the cytokine receptor-like factor 3 family.

It localises to the cytoplasm. In terms of biological role, may play a role in the negative regulation of cell cycle progression. This Danio rerio (Zebrafish) protein is Cytokine receptor-like factor 3 (crlf3).